The sequence spans 143 residues: Small ribosomal subunit protein uS9 (143 aa).

The residue at position 2 (S2) is an N-acetylserine. The tract at residues 123–143 (MPEPKKFGGKGARSRYQKSYR) is disordered. Positions 134 to 143 (ARSRYQKSYR) are enriched in basic residues.

Belongs to the universal ribosomal protein uS9 family.

The polypeptide is Small ribosomal subunit protein uS9 (RPS16) (Maudiozyma exigua (Yeast)).